Here is a 395-residue protein sequence, read N- to C-terminus: GPI-anchor transamidase (395 aa).

The N-terminal stretch at 1–27 (MVDTCFLSRGLTTLAGLLLLPFGSLAA) is a signal peptide. Over 28–368 (SQIEDQAEQF…PKLKDWHPPG (341 aa)) the chain is Lumenal. Ca(2+)-binding residues include Asp-79, Ile-82, Glu-118, and Asp-120. The active-site Proton donor is His-164. The Nucleophile; acyl-thioester intermediate role is filled by Cys-206. The a protein site is built by Cys-206, Ser-232, and Ser-234. Residues 231-236 (DSLSHQ) form an autoinhibitory loop region. A disulfide bond links Cys-275 and Cys-280. A helical membrane pass occupies residues 369–385 (GFILGLWALIIMVFFKT). Residues 386 to 395 (YGIKHMKFIF) lie on the Cytoplasmic side of the membrane.

This sequence belongs to the peptidase C13 family. As to quaternary structure, heteropentamer. Part of the GPI-anchor transamidase complex, consisting of PIGK, PIGT, PIGS, PIGU and GAA1. Interacts with GPAA1. Interacts with PIGT; this interaction, via a disulfide link, stabilizes the expression of GAA1 and PIGK and links them to PIGS. The disulfide bond between PIGK/GPI8 and PIGT is important for normal enzyme activity.

It is found in the endoplasmic reticulum membrane. Its pathway is glycolipid biosynthesis; glycosylphosphatidylinositol-anchor biosynthesis. In the absence of proproteins substrates, exists in an inactive state with a disrupted catalytic site by an autoinhibitory loop. The binding of proprotein substrates, particularly the CSP region, to GPI-T triggers concerted conformational changes that alleviate the inhibition by the autoinhibitory loop. Meanwhile, proprotein residues near the omega- site induce the formation of a catalytic cleft for catalysis, following which the products are released and GPI-T reverts to the inactive state. Functionally, catalytic subunit of the glycosylphosphatidylinositol-anchor (GPI-anchor) transamidase (GPI-T) complex that catalyzes the formation of the linkage between a proprotein and a GPI-anchor and participates in GPI anchored protein biosynthesis. Recognizes diverse proproteins at a C-terminal signal peptide (CSP) region that lacks consensus sequence and replaces it with a GPI-anchor via a transamidation reaction. Transamidation catalysis reaction follows a two-phase mechanism. In the acyl-enzyme phase, the carbonyl group of the proproteins's omega-site undergoes a nucleophilic attack forming an enzyme-substrate thioester bond. Followed by a general acid catalysis that allows CSP releasing, regenerating the carbonyl, and forming the acyl-enzyme intermediate. In the GPI-anchor attachment phase, the amino group of the GPI-anchor's ethanolamine phosphate, the one on third mannose (EtNP3), mediates a nucleophilic attack on the carbonyl of the acyl-enzyme intermediate, replacing the CSP, allowing GPI-anchor attachment to the omega-residue, therefore forming the product and freeing the enzyme. The protein is GPI-anchor transamidase of Bos taurus (Bovine).